The chain runs to 86 residues: Putative pro-MCH-like protein 1 (86 aa).

Positions 31 to 49 (GSVAFPAENGVQDTESTQE) are NGE-like. The interval 38–62 (ENGVQDTESTQEKRETGDEENSAKF) is disordered. Residues 52–64 (ETGDEENSAKFPV) form an NEI-like region. Positions 68-86 (DFDTLSCMLGRVYQSCWQV) are melanin-concentrating hormone-like.

It belongs to the melanin-concentrating hormone family. Expressed in testis and brain.

This Homo sapiens (Human) protein is Putative pro-MCH-like protein 1 (PMCHL1).